We begin with the raw amino-acid sequence, 175 residues long: Ribosome maturation factor RimM (175 aa).

The region spanning 95-175 (SEDEFYWREL…RIEVDWDPGF (81 aa)) is the PRC barrel domain.

This sequence belongs to the RimM family. Binds ribosomal protein uS19.

Its subcellular location is the cytoplasm. Functionally, an accessory protein needed during the final step in the assembly of 30S ribosomal subunit, possibly for assembly of the head region. Essential for efficient processing of 16S rRNA. May be needed both before and after RbfA during the maturation of 16S rRNA. It has affinity for free ribosomal 30S subunits but not for 70S ribosomes. The sequence is that of Ribosome maturation factor RimM from Aliivibrio salmonicida (strain LFI1238) (Vibrio salmonicida (strain LFI1238)).